We begin with the raw amino-acid sequence, 488 residues long: Annexin A7 (488 aa).

The segment covering 1-18 has biased composition (pro residues); sequence MSYPGYPPTGYPPFPGYP. Disordered regions lie at residues 1-49 and 71-143; these read MSYP…YPQV and GYPG…PTYP. Positions 1–143 are repeat-rich region; it reads MSYPGYPPTG…QYPGGQPTYP (143 aa). The segment at 5–20 is 3 X 5 AA tandem repeats of G-Y-P-P-X; sequence GYPPTGYPPFPGYPPA. The segment covering 89-102 has biased composition (gly residues); that stretch reads PGQGFGVPPGGAGF. Annexin repeat units follow at residues 185–256, 257–328, 340–412, and 416–487; these read FDAI…ALFM, PPTY…SMCQ, QMAQ…TILQ, and NRPA…AIVG. The residue at position 233 (Lys233) is an N6-acetyllysine.

This sequence belongs to the annexin family. As to quaternary structure, interacts with PDCD6. Isoform 1 is expressed in brain, heart and skeletal muscle. Isoform 2 is more abundant in liver, lung, kidney, spleen, fibroblasts and placenta.

Calcium/phospholipid-binding protein which promotes membrane fusion and is involved in exocytosis. The polypeptide is Annexin A7 (ANXA7) (Homo sapiens (Human)).